The following is a 158-amino-acid chain: uncharacterized protein (158 aa).

The 98-residue stretch at 13–110 (ESVGRALELV…WGDEYLPRPE (98 aa)) folds into the HTH hxlR-type domain.

This is an uncharacterized protein from Mycobacterium tuberculosis (strain CDC 1551 / Oshkosh).